The sequence spans 1010 residues: Phosphatidylserine decarboxylase proenzyme 2 (1010 aa).

2 C2 domains span residues 1–114 (MSQA…SSWE) and 247–370 (DFES…DKPC). Asp342, Ser345, and Asp348 together coordinate Ca(2+). In terms of domain architecture, EF-hand spans 458-493 (LRRQLWMHLLQGNDTQMKGTLDLIELNYFVDCLGSN). Residues Asp734, His793, and Ser880 each act as charge relay system; for autoendoproteolytic cleavage activity in the active site. Ser880 acts as the Schiff-base intermediate with substrate; via pyruvic acid; for decarboxylase activity in catalysis. Pyruvic acid (Ser); by autocatalysis is present on Ser880.

The protein belongs to the phosphatidylserine decarboxylase family. PSD-B subfamily. Eukaryotic type II sub-subfamily. As to quaternary structure, heterodimer of a large membrane-associated beta subunit and a small pyruvoyl-containing alpha subunit. Interacts with pstB2. This interaction may be a means to structurally tether the donor membrane (ER) harboring PstB2 to acceptor membranes (Golgi/endosomes) harboring PSD2 during PtdSer transport to the site of PtdEtn synthesis. The cofactor is pyruvate. Requires Ca(2+) as cofactor. Is synthesized initially as an inactive proenzyme. Formation of the active enzyme involves a self-maturation process in which the active site pyruvoyl group is generated from an internal serine residue via an autocatalytic post-translational modification. Two non-identical subunits are generated from the proenzyme in this reaction, and the pyruvate is formed at the N-terminus of the alpha chain, which is derived from the carboxyl end of the proenzyme. The autoendoproteolytic cleavage occurs by a canonical serine protease mechanism, in which the side chain hydroxyl group of the serine supplies its oxygen atom to form the C-terminus of the beta chain, while the remainder of the serine residue undergoes an oxidative deamination to produce ammonia and the pyruvoyl prosthetic group on the alpha chain. During this reaction, the Ser that is part of the protease active site of the proenzyme becomes the pyruvoyl prosthetic group, which constitutes an essential element of the active site of the mature decarboxylase.

The protein resides in the golgi apparatus membrane. The protein localises to the endosome membrane. The enzyme catalyses a 1,2-diacyl-sn-glycero-3-phospho-L-serine + H(+) = a 1,2-diacyl-sn-glycero-3-phosphoethanolamine + CO2. Its pathway is phospholipid metabolism; phosphatidylethanolamine biosynthesis; phosphatidylethanolamine from CDP-diacylglycerol: step 2/2. Functionally, catalyzes the formation of phosphatidylethanolamine (PtdEtn) from phosphatidylserine (PtdSer). Plays a central role in phospholipid metabolism and in the interorganelle trafficking of phosphatidylserine. This is Phosphatidylserine decarboxylase proenzyme 2 from Komagataella phaffii (strain GS115 / ATCC 20864) (Yeast).